A 50-amino-acid chain; its full sequence is Large ribosomal subunit protein bL33B (50 aa).

This sequence belongs to the bacterial ribosomal protein bL33 family.

This is Large ribosomal subunit protein bL33B from Mycoplasmopsis agalactiae (strain NCTC 10123 / CIP 59.7 / PG2) (Mycoplasma agalactiae).